The sequence spans 206 residues: Transmembrane emp24 domain-containing protein bai (206 aa).

A signal peptide spans 1–20 (MLKVLYVIFTIFGYIWPIYS). Residues 21–172 (VMFHLTPNTQ…RDTNEKTNSR (152 aa)) are Lumenal-facing. The GOLD domain occupies 30–140 (QKCLKEDIQA…LKPLEVDLKR (111 aa)). Residues 173-193 (VLFFSIFSMCCLLGLATWQVL) form a helical membrane-spanning segment. The Cytoplasmic portion of the chain corresponds to 194–206 (YLRRYFKAKKLIE).

Belongs to the EMP24/GP25L family.

The protein resides in the membrane. Its function is as follows. Eca and bai are essential, though not redundant, for dorsoventral patterning of the embryo. Specifically required during early embryogenesis for the activity of maternal tkv, while the zygotic tkv is not affected. The polypeptide is Transmembrane emp24 domain-containing protein bai (Drosophila virilis (Fruit fly)).